The chain runs to 297 residues: 4-hydroxy-tetrahydrodipicolinate synthase (297 aa).

Thr50 contributes to the pyruvate binding site. Catalysis depends on Tyr139, which acts as the Proton donor/acceptor. The Schiff-base intermediate with substrate role is filled by Lys167. Val209 serves as a coordination point for pyruvate.

It belongs to the DapA family. As to quaternary structure, homotetramer; dimer of dimers.

It localises to the cytoplasm. The enzyme catalyses L-aspartate 4-semialdehyde + pyruvate = (2S,4S)-4-hydroxy-2,3,4,5-tetrahydrodipicolinate + H2O + H(+). It functions in the pathway amino-acid biosynthesis; L-lysine biosynthesis via DAP pathway; (S)-tetrahydrodipicolinate from L-aspartate: step 3/4. Catalyzes the condensation of (S)-aspartate-beta-semialdehyde [(S)-ASA] and pyruvate to 4-hydroxy-tetrahydrodipicolinate (HTPA). The sequence is that of 4-hydroxy-tetrahydrodipicolinate synthase from Microcystis aeruginosa (strain NIES-843 / IAM M-2473).